The chain runs to 378 residues: Protein-glutamate methylesterase/protein-glutamine glutaminase 2 (378 aa).

The Response regulatory domain occupies 4–121 (KVLVVDDSGF…SRNPEKVKQL (118 aa)). Aspartate 55 bears the 4-aspartylphosphate mark. The tract at residues 141 to 188 (APAPAAAPTPAPIPAAAPSSFGSHSAPARPAPAPAPTRAPAASASSPA) is disordered. Pro residues predominate over residues 145–155 (AAAPTPAPIPA). Composition is skewed to low complexity over residues 156 to 168 (AAPS…SAPA) and 178 to 188 (RAPAASASSPA). The CheB-type methylesterase domain maps to 187 to 378 (PAPKRKNYKL…IGKHIVEACV (192 aa)). Catalysis depends on residues serine 202, histidine 229, and aspartate 322.

The protein belongs to the CheB family. In terms of processing, phosphorylated by CheA. Phosphorylation of the N-terminal regulatory domain activates the methylesterase activity.

The protein resides in the cytoplasm. The enzyme catalyses [protein]-L-glutamate 5-O-methyl ester + H2O = L-glutamyl-[protein] + methanol + H(+). It carries out the reaction L-glutaminyl-[protein] + H2O = L-glutamyl-[protein] + NH4(+). Functionally, involved in chemotaxis. Part of a chemotaxis signal transduction system that modulates chemotaxis in response to various stimuli. Catalyzes the demethylation of specific methylglutamate residues introduced into the chemoreceptors (methyl-accepting chemotaxis proteins or MCP) by CheR. Also mediates the irreversible deamidation of specific glutamine residues to glutamic acid. This Pseudomonas fluorescens (strain Pf0-1) protein is Protein-glutamate methylesterase/protein-glutamine glutaminase 2.